Reading from the N-terminus, the 507-residue chain is ATP synthase subunit alpha, chloroplastic (507 aa).

170-177 (GDRQTGKT) contributes to the ATP binding site.

The protein belongs to the ATPase alpha/beta chains family. In terms of assembly, F-type ATPases have 2 components, CF(1) - the catalytic core - and CF(0) - the membrane proton channel. CF(1) has five subunits: alpha(3), beta(3), gamma(1), delta(1), epsilon(1). CF(0) has four main subunits: a, b, b' and c.

The protein localises to the plastid. It localises to the chloroplast thylakoid membrane. It carries out the reaction ATP + H2O + 4 H(+)(in) = ADP + phosphate + 5 H(+)(out). Its function is as follows. Produces ATP from ADP in the presence of a proton gradient across the membrane. The alpha chain is a regulatory subunit. This chain is ATP synthase subunit alpha, chloroplastic, found in Citrus sinensis (Sweet orange).